The sequence spans 551 residues: Cation/acetate symporter ActP (551 aa).

Transmembrane regions (helical) follow at residues 8-28, 35-55, 78-98, 105-125, 151-171, 185-205, 208-228, 264-284, 305-325, 357-377, 406-426, 430-450, 465-485, and 496-516; these read ALAA…TGAV, WQAI…TYWA, GLAI…SALV, GLIY…LIAE, LSAC…MVGA, VAVV…GMLA, WVQI…AFMV, ISAL…PHIL, GFMG…IMLV, LFLG…VAGL, VSKI…ILFE, IAFM…PIIL, VGGW…PTIW, and FPYE…IWVF.

This sequence belongs to the sodium:solute symporter (SSF) (TC 2.A.21) family.

Its subcellular location is the cell inner membrane. Transports acetate. The polypeptide is Cation/acetate symporter ActP (Klebsiella pneumoniae (strain 342)).